A 1058-amino-acid polypeptide reads, in one-letter code: Bromodomain-containing protein 1 (1058 aa).

A compositionally biased stretch (basic residues) spans 1–12 (MRRKGRCHRGSA). A disordered region spans residues 1-26 (MRRKGRCHRGSAARHPSSPCSVKHSP). Positions 31–80 (LTYAQAQRMVEIEIEGRLHRISIFDPLEIILEDDLTAQEMSECNSNKENS) are interaction with KAT7/HBO1 and histones. The interval 92 to 116 (HKNNRVKKKNEALPSAHGTPASASA) is disordered. Ser-128 bears the Phosphoserine mark. The segment at 214 to 264 (DAVCCICMDGECQNSNVILFCDMCNLAVHQECYGVPYIPEGQWLCRHCLQS) adopts a PHD-type 1 zinc-finger fold. The C2HC pre-PHD-type zinc-finger motif lies at 268–301 (PADCVLCPNKGGAFKKTDDDRWGHVVCALWIPEV). The segment at 325–389 (LTCYLCKQKG…RKTAYCDVHT (65 aa)) adopts a PHD-type 2 zinc-finger fold. An N6-acetyllysine mark is found at Lys-368, Lys-516, and Lys-519. Glycyl lysine isopeptide (Lys-Gly) (interchain with G-Cter in SUMO2) cross-links involve residues Lys-554 and Lys-594. The region spanning 562–666 (LRLTPLTVLL…DQGGVVLRQA (105 aa)) is the Bromo domain. Disordered stretches follow at residues 755-776 (LSQQ…EEDG) and 791-868 (LETL…DSSF). Ser-803 carries the post-translational modification Phosphoserine. Residues 852–867 (SESSISSSNSPLCDSS) are compositionally biased toward low complexity. Lys-903 is subject to N6-acetyllysine. The residue at position 906 (Arg-906) is a Phosphoserine. A PWWP domain is found at 929-1012 (PLKVVWAKCS…KSKMVPLGID (84 aa)). A phosphoserine mark is found at Ser-1052 and Ser-1055.

In terms of assembly, component of some HBO1 complex composed of KAT7/HBO1, MEAF6, ING4 and BRD1/BRPF2. Component of the MOZ/MORF complex composed at least of ING5, KAT6A, KAT6B, MEAF6 and one of BRPF1, BRD1/BRPF2 and BRPF3. Interacts (via PHD-type zinc finger domain) with unmodified histone H3. Interacts (via PWWP domain) with dimethylated and trimethylated 'Lys-79' on histone H3. Highly expressed in testis.

Its subcellular location is the nucleus. The protein resides in the chromosome. In terms of biological role, scaffold subunit of various histone acetyltransferase (HAT) complexes, such as the MOZ/MORF and HBO1 complexes, that acts as a regulator of hematopoiesis. Plays a key role in HBO1 complex by directing KAT7/HBO1 specificity towards histone H3 'Lys-14' acetylation (H3K14ac), thereby promoting erythroid differentiation. In Homo sapiens (Human), this protein is Bromodomain-containing protein 1.